Here is a 150-residue protein sequence, read N- to C-terminus: Small ribosomal subunit protein uS11y (150 aa).

At Ser19 the chain carries Phosphoserine.

This sequence belongs to the universal ribosomal protein uS11 family.

It localises to the cytoplasm. This chain is Small ribosomal subunit protein uS11y (RPS14B), found in Arabidopsis thaliana (Mouse-ear cress).